Reading from the N-terminus, the 412-residue chain is Alpha-1-antiproteinase (412 aa).

Residues 1 to 24 (MTPSISWGLLLLAGLFCLVPSFLA) form the signal peptide. Phosphoserine is present on Ser33. Residues Asn100, Asn133, Asn264, and Asn313 are each glycosylated (N-linked (GlcNAc...) asparagine). An RCL region spans residues 367-386 (AATVLQAVPMSMPPILNFNK). A Phosphoserine modification is found at Ser377.

The protein belongs to the serpin family. As to quaternary structure, interacts with CELA2A. Interacts with ERGIC3 and LMAN1/ERGIC53. Interacts with PRSS1/Trypsin. Expressed not only in liver but also in kidney tubule cells, where it is regulated by androgens during development.

The protein resides in the secreted. Inhibitor of serine proteases. Its primary target is elastase, but it also has a moderate affinity for plasmin and thrombin. The polypeptide is Alpha-1-antiproteinase (Serpina1) (Mus caroli (Ryukyu mouse)).